We begin with the raw amino-acid sequence, 228 residues long: Secreted LysM effector ECP6 (228 aa).

The signal sequence occupies residues 1 to 18 (MQSMILFAAALMGAAVNG). 4 disulfides stabilise this stretch: cysteine 36–cysteine 90, cysteine 64–cysteine 98, cysteine 109–cysteine 163, and cysteine 168–cysteine 220. The LysM 1 domain occupies 42 to 86 (IKYTVVKGDTLTSIAKKFKSGICNIVSVNKLANPNLIELGATLII). Residues threonine 51, threonine 53, asparagine 76, and isoleucine 78 each contribute to the chitin site. N-linked (GlcNAc...) asparagine glycosylation is found at asparagine 89, asparagine 95, asparagine 127, and asparagine 133. LysM domains follow at residues 115–160 (GSYT…IITV) and 172–216 (GTYN…QIIL). Chitin-binding residues include glycine 179, leucine 181, valine 183, proline 205, serine 206, and leucine 208. The N-linked (GlcNAc...) asparagine glycan is linked to asparagine 222.

Belongs to the secreted LysM effector family. In terms of assembly, forms homodimers.

The protein resides in the secreted. Secreted effector that enables the plant pathogenic fungus to manipulate host defenses for successful infection. Binds chitine, but not to any other glycan, including the N-linked glycan chitobiose. Outcompetes host immune receptor for chitin binding through intrachain LysM dimerization. During infection, sequesters chitin oligosaccharides that are released from the cell walls of invading hyphae to prevent elicitation of host immunity. The chain is Secreted LysM effector ECP6 from Passalora fulva (Tomato leaf mold).